Here is a 37-residue protein sequence, read N- to C-terminus: QFTDVDCSVSKECWSVCKDLFGVDRGKCMGKKCRCYQ.

Gln-1 carries the post-translational modification Pyrrolidone carboxylic acid. 3 disulfides stabilise this stretch: Cys-7/Cys-28, Cys-13/Cys-33, and Cys-17/Cys-35. Residues 26 to 33 are interaction with Ca(2+)-activated K(+) channels; the sequence is GKCMGKKC.

Belongs to the short scorpion toxin superfamily. Potassium channel inhibitor family. Alpha-KTx 01 subfamily. In terms of tissue distribution, expressed by the venom gland.

It is found in the secreted. Functionally, blocks selectively the high conductance calcium-activated (maxi-K) potassium channels (KCa1.1/KCNMA1). The sequence is that of Potassium channel toxin alpha-KTx 1.3 from Hottentotta tamulus (Eastern Indian scorpion).